A 237-amino-acid chain; its full sequence is Protein GrpE (237 aa).

Disordered regions lie at residues 1–52 and 200–237; these read MSGD…RLQQ and KVSMGPGPQSGASPSSAQPNDDSTATFQGEADPAQPGV. The segment covering 27–40 has biased composition (polar residues); the sequence is ASINSDEGQSSAQS. Residues 204–218 are compositionally biased toward low complexity; the sequence is GPGPQSGASPSSAQP.

This sequence belongs to the GrpE family. As to quaternary structure, homodimer.

Its subcellular location is the cytoplasm. In terms of biological role, participates actively in the response to hyperosmotic and heat shock by preventing the aggregation of stress-denatured proteins, in association with DnaK and GrpE. It is the nucleotide exchange factor for DnaK and may function as a thermosensor. Unfolded proteins bind initially to DnaJ; upon interaction with the DnaJ-bound protein, DnaK hydrolyzes its bound ATP, resulting in the formation of a stable complex. GrpE releases ADP from DnaK; ATP binding to DnaK triggers the release of the substrate protein, thus completing the reaction cycle. Several rounds of ATP-dependent interactions between DnaJ, DnaK and GrpE are required for fully efficient folding. This Prochlorococcus marinus (strain MIT 9313) protein is Protein GrpE.